A 708-amino-acid chain; its full sequence is Ion-translocating oxidoreductase complex subunit C (708 aa).

2 consecutive 4Fe-4S ferredoxin-type domains span residues 369-397 (GEPQ…QQLY) and 407-436 (KATT…VQYF). [4Fe-4S] cluster contacts are provided by Cys-377, Cys-380, Cys-383, Cys-387, Cys-416, Cys-419, Cys-422, and Cys-426. Residues 630–682 (AKARKLEQQQANAEPEEQIDPRKAAVEAAIARAKARKLEQQQANAEPEEQIDP) are disordered.

Belongs to the 4Fe4S bacterial-type ferredoxin family. RnfC subfamily. The complex is composed of six subunits: RsxA, RsxB, RsxC, RsxD, RsxE and RsxG. [4Fe-4S] cluster is required as a cofactor.

Its subcellular location is the cell inner membrane. Its function is as follows. Part of a membrane-bound complex that couples electron transfer with translocation of ions across the membrane. Required to maintain the reduced state of SoxR. This chain is Ion-translocating oxidoreductase complex subunit C, found in Escherichia coli O1:K1 / APEC.